We begin with the raw amino-acid sequence, 268 residues long: GTP cyclohydrolase FolE2 (268 aa).

The protein belongs to the GTP cyclohydrolase IV family.

It catalyses the reaction GTP + H2O = 7,8-dihydroneopterin 3'-triphosphate + formate + H(+). Its pathway is cofactor biosynthesis; 7,8-dihydroneopterin triphosphate biosynthesis; 7,8-dihydroneopterin triphosphate from GTP: step 1/1. Converts GTP to 7,8-dihydroneopterin triphosphate. The polypeptide is GTP cyclohydrolase FolE2 (Paraburkholderia xenovorans (strain LB400)).